Consider the following 281-residue polypeptide: Bifunctional protein FolD (281 aa).

Residues 164–166, isoleucine 189, and isoleucine 230 contribute to the NADP(+) site; that span reads GAS.

The protein belongs to the tetrahydrofolate dehydrogenase/cyclohydrolase family. In terms of assembly, homodimer.

It catalyses the reaction (6R)-5,10-methylene-5,6,7,8-tetrahydrofolate + NADP(+) = (6R)-5,10-methenyltetrahydrofolate + NADPH. The catalysed reaction is (6R)-5,10-methenyltetrahydrofolate + H2O = (6R)-10-formyltetrahydrofolate + H(+). It participates in one-carbon metabolism; tetrahydrofolate interconversion. In terms of biological role, catalyzes the oxidation of 5,10-methylenetetrahydrofolate to 5,10-methenyltetrahydrofolate and then the hydrolysis of 5,10-methenyltetrahydrofolate to 10-formyltetrahydrofolate. The chain is Bifunctional protein FolD from Sulfurovum sp. (strain NBC37-1).